We begin with the raw amino-acid sequence, 229 residues long: MVSLRMHELPVNDQPRERLARLGAGALSDAELLAILLRVGISGTNVLQLAQQLLGEYGGWIGLQVADYNDLCRRTGIGASKAATIKAALEIGRRLARSSVEERYPIRSPGDVAALLMVEMSHLDQEHLRTVLLDTKHRVQQINTVYIGSLNSATIRIGEVFKEAVRRNSAAIIVVHNHPSGEATPSPEDIQVTRQLVAAGRLLDIEVLDHLIIGRGQYVSLRERGIGFE.

The region spanning 105–227 (PIRSPGDVAA…YVSLRERGIG (123 aa)) is the MPN domain. Zn(2+) is bound by residues His176, His178, and Asp189. The JAMM motif motif lies at 176–189 (HNHPSGEATPSPED).

This sequence belongs to the UPF0758 family.

This Chloroflexus aggregans (strain MD-66 / DSM 9485) protein is UPF0758 protein Cagg_0777.